A 1906-amino-acid polypeptide reads, in one-letter code: Zinc metalloprotease ZmpB (1906 aa).

A signal peptide spans 1–33 (MFKKDRFSIRKIKGVVGSVFLGSLLMAPSVVDA). Positions 34–76 (ATYHYVNKEIISQEAKDLIQTGKPDRNEVVYGLVYQKDQLPQT) are excised as a propeptide. An LPXTG sorting signal motif is present at residues 73-77 (LPQTG). Thr-76 bears the Pentaglycyl murein peptidoglycan amidated threonine mark. 2 consecutive transmembrane segments (helical) span residues 77–98 (GTEA…LLIY) and 105–127 (SVFL…DPVA). The Extracellular portion of the chain corresponds to 128 to 1906 (TLALASREGV…TNSFKTSIFK (1779 aa)). Residues 178-436 (VETPQSITNQ…KASSVSPTDY (259 aa)) form a disordered region. Over residues 181 to 196 (PQSITNQEQARTENQV) the composition is skewed to polar residues. 5 stretches are compositionally biased toward basic and acidic residues: residues 201 to 239 (EAPK…KEDS), 252 to 262 (VESKPEEKVAV), 271 to 335 (KPAE…KEET), 352 to 375 (KQTE…REDE), and 383 to 408 (EPEK…DKIK). 4 tandem repeats follow at residues 277-291 (KVEQ…REDE), 293-315 (APVE…ETPK), 361-375 (KVEQ…REDE), and 380-402 (APVE…ETPK). The segment at 277–375 (KVEQAGEPVA…GEPVAPREDE (99 aa)) is 2 X 15 AA repeats of K-V-E-Q-A-G-E-P-V-A-P-R-E-D-E. Residues 293 to 375 (APVEPEKQPE…GEPVAPREDE (83 aa)) form a 2 X 23 AA approximate repeats region. The segment covering 421 to 436 (LNNQIDKASSVSPTDY) has biased composition (polar residues). Residue His-1562 participates in Zn(2+) binding. The active site involves Glu-1563. Residues His-1566 and Glu-1586 each contribute to the Zn(2+) site.

Belongs to the peptidase M26 family. Zn(2+) serves as cofactor. In terms of processing, the Gram-positive cell-wall anchor motif LPXTG is located in the N-terminal part, in contrast to such motifs in other known streptococcal and staphylococcal proteins. The protease could be cleaved by the sortase and anchored in the membrane via the two potential N-terminal transmembrane domains, whereas the propeptide located prior to the LPXTG motif would remain attached to the cell wall peptidoglycan by an amide bond.

It is found in the secreted. The protein localises to the cell wall. Its subcellular location is the membrane. Is a virulence factor capable of inducing inflammation in the lower respiratory tract, by increasing tumor necrosis factor alpha (TNF-alpha) concentration in the lungs. Also appears to have other functions important in virulence in models of pneumonia and septicemia. This Streptococcus pneumoniae serotype 4 (strain ATCC BAA-334 / TIGR4) protein is Zinc metalloprotease ZmpB (zmpB).